A 203-amino-acid chain; its full sequence is Eukaryotic translation initiation factor isoform 4E (203 aa).

A compositionally biased stretch (low complexity) spans 1–25 (MATETAGAVVESSSAATVPSPAPEA). A disordered region spans residues 1–27 (MATETAGAVVESSSAATVPSPAPEAGS). Residues 47–52 (QGAAWG), Lys79, and 97–98 (WE) contribute to the mRNA site. Residues Cys102 and Cys141 are joined by a disulfide bond. 148–153 (RQRQDK) lines the mRNA pocket.

It belongs to the eukaryotic initiation factor 4E family. EIF4F is a multi-subunit complex, the composition of which varies with external and internal environmental conditions. It is composed of at least EIF4A, EIF4E and EIF4G. EIF4E is also known to interact with other partners. In higher plants two isoforms of EIF4F have been identified, named isoform EIF4F and isoform EIF(iso)4F. Isoform EIF4F has subunits p220 and p26, whereas isoform EIF(iso)4F has subunits p82 and p28. In terms of assembly, (Microbial infection) Interacts with the potyvirus peanut stripe virus (PStV) helper component proteinase (HC-Pro) in the cytoplasm and with PStV viral genome-linked protein (VPg) in the nucleus; these interactions are possible in susceptible hosts but impaired in resistant plants. In terms of processing, according to the redox status, the Cys-102-Cys-141 disulfide bridge may have a role in regulating protein function by affecting its ability to bind capped mRNA. As to expression, expressed ubiquitously with highest levels in young leaves and roots, and lowest levels in flowers.

The protein localises to the cytoplasm. It is found in the nucleus. In terms of biological role, component of the protein complex eIF4F, which is involved in the recognition of the mRNA cap, ATP-dependent unwinding of 5'-terminal secondary structure and recruitment of mRNA to the ribosome. Recognizes and binds the 7-methylguanosine-containing mRNA cap during an early step in the initiation of protein synthesis and facilitates ribosome binding by inducing the unwinding of the mRNAs secondary structures. Key component of recessive resistance to potyviruses such as peanut stripe virus (PStV). Its function is as follows. (Microbial infection) Susceptibility host factor required for viral infection by recruiting viral RNAs to the host ribosomal complex via an interaction with viral genome-linked protein (VPg). The protein is Eukaryotic translation initiation factor isoform 4E of Arachis hypogaea (Peanut).